The following is a 433-amino-acid chain: Histone acetyltransferase type B subunit 2 (433 aa).

WD repeat units follow at residues 134 to 174, 187 to 227, 237 to 277, 282 to 322, and 326 to 366; these read NHDG…NTPS, GQHK…KPNN, GHTA…SAPK, AHTG…VKLH, and SHTD…QEQT. The interaction with the histone H4 N-terminus stretch occupies residues 368–372; that stretch reads DDAED. A WD 6 repeat occupies 383 to 433; sequence GHTSRPTDLAWSPHMEWALTSAAEDNIVMVWRPSKAVIDTGNEELTPDDLE.

This sequence belongs to the WD repeat RBAP46/RBAP48/MSI1 family. In terms of assembly, component of the HAT-B complex composed of at least HAT1 and HAT2. The HAT-B complex binds to histone H4 tail.

It is found in the cytoplasm. The protein resides in the nucleus. In terms of biological role, regulatory subunit of the histone acetylase B (HAT-B) complex. The complex acetylates 'Lys-12' of histone H4 which is required for telomeric silencing. The chain is Histone acetyltransferase type B subunit 2 (HAT2) from Mycosarcoma maydis (Corn smut fungus).